A 346-amino-acid chain; its full sequence is DNA-directed RNA polymerase subunit alpha (346 aa).

An alpha N-terminal domain (alpha-NTD) region spans residues 1-242; the sequence is MLIQDGDKLI…DQLSVFINFD (242 aa). The alpha C-terminal domain (alpha-CTD) stretch occupies residues 258-346; sequence LNPNLFKSID…WLKRKEKNEA (89 aa).

Belongs to the RNA polymerase alpha chain family. As to quaternary structure, homodimer. The RNAP catalytic core consists of 2 alpha, 1 beta, 1 beta' and 1 omega subunit. When a sigma factor is associated with the core the holoenzyme is formed, which can initiate transcription.

The catalysed reaction is RNA(n) + a ribonucleoside 5'-triphosphate = RNA(n+1) + diphosphate. Functionally, DNA-dependent RNA polymerase catalyzes the transcription of DNA into RNA using the four ribonucleoside triphosphates as substrates. This Maridesulfovibrio salexigens (strain ATCC 14822 / DSM 2638 / NCIMB 8403 / VKM B-1763) (Desulfovibrio salexigens) protein is DNA-directed RNA polymerase subunit alpha.